A 341-amino-acid chain; its full sequence is Krueppel-like factor 17 (341 aa).

A disordered region spans residues 214–252 (VTESNTQEEPFVREPPTPAPEGAESPSTSRGATRRQSPV). Residues 238–252 (SPSTSRGATRRQSPV) show a composition bias toward polar residues. 3 consecutive C2H2-type zinc fingers follow at residues 256–280 (YVCTYNSCGKSYTKRSHLVSHQRKH), 286–310 (FACDWNGCTWKFFRSDELGRHKRIH), and 316–338 (HKCDECDREFMRSDHLRQHKRTH).

This sequence belongs to the Sp1 C2H2-type zinc-finger protein family. As to expression, exclusively expressed in testis and ovary. Localized to step 3-8 spermatids in testis and growing oocytes in ovary.

It is found in the nucleus. In terms of biological role, transcription repressor that binds to the promoter of target genes and prevents their expression. Acts as a negative regulator of epithelial-mesenchymal transition and metastasis in breast cancer. Specifically binds the 5'-CACCC-3' sequence in the promoter of ID1, a key metastasis regulator in breast cancer, and repress its expression. May be a germ cell-specific transcription factor that plays important roles in spermatid differentiation and oocyte development. The chain is Krueppel-like factor 17 (Klf17) from Mus musculus (Mouse).